Reading from the N-terminus, the 608-residue chain is Developmental regulatory protein wetA (608 aa).

7 disordered regions span residues 54 to 88 (ADHHGHNPGMPTLADGLMLDHPSESTASASSGVST), 102 to 125 (VDATVPSQPGSSAAPGASHDVDPR), 146 to 186 (VSMS…MTRK), 202 to 226 (SKLRKPRKPIAMDRPGSPTMDNPPR), 309 to 352 (WPHQ…HAVP), 447 to 544 (AQTY…GDIG), and 556 to 576 (LMTGVAPSGSSKTKARREREA). Composition is skewed to low complexity over residues 77-88 (ESTASASSGVST), 107-119 (PSQPGSSAAPGAS), and 163-175 (SSPGRRVPVSQPS). Residues 313–338 (QHPHPHPHPHHPQAHTHPHPHPHPHP) show a composition bias toward basic residues. Low complexity-rich tracts occupy residues 339-350 (HQQAVAGHPQHA) and 502-517 (SSNGSVASARSASGRG).

Belongs to the wetA family.

In terms of biological role, abaA and wetA are pivotal regulators of conidiophore development and conidium maturation. They act individually and together to regulate their own expression and that of numerous other sporulation-specific genes. Functions to maintain conidial dormancy by suppressing microcycle conidiation. This chain is Developmental regulatory protein wetA, found in Gibberella zeae (strain ATCC MYA-4620 / CBS 123657 / FGSC 9075 / NRRL 31084 / PH-1) (Wheat head blight fungus).